A 102-amino-acid chain; its full sequence is MKFKYGATLFSGFLGLSAILAACGAKGKFDQVDDGKIVLASSLTSKNAANALQAVVEKYNQVKGGNDYPIEITQITGGYDGGRGNLQTKLSVKDKTTFYNLI.

Positions 1 to 22 are cleaved as a signal peptide; sequence MKFKYGATLFSGFLGLSAILAA. A lipid anchor (N-palmitoyl cysteine) is attached at Cys-23. Cys-23 carries the S-diacylglycerol cysteine lipid modification.

The protein belongs to the MG185/MG260 family.

Its subcellular location is the cell membrane. This is an uncharacterized protein from Mycoplasma pneumoniae (strain ATCC 29342 / M129 / Subtype 1) (Mycoplasmoides pneumoniae).